Consider the following 482-residue polypeptide: Argininosuccinate synthase (482 aa).

Residues 17-25 and alanine 43 each bind ATP; that span reads AFSGGLDTS. An L-citrulline-binding site is contributed by tyrosine 99. Glycine 129 and threonine 131 together coordinate ATP. 3 residues coordinate L-aspartate: threonine 131, asparagine 135, and aspartate 136. An L-citrulline-binding site is contributed by asparagine 135. Aspartate 136 contacts ATP. L-citrulline contacts are provided by arginine 139 and serine 192. An ATP-binding site is contributed by aspartate 194. The L-citrulline site is built by threonine 201, glutamate 203, and glutamate 280. The interval 461–482 is disordered; it reads SRGEATDEETMLDRAAMESGTD.

This sequence belongs to the argininosuccinate synthase family. Type 2 subfamily. In terms of assembly, homotetramer.

Its subcellular location is the cytoplasm. The catalysed reaction is L-citrulline + L-aspartate + ATP = 2-(N(omega)-L-arginino)succinate + AMP + diphosphate + H(+). Its pathway is amino-acid biosynthesis; L-arginine biosynthesis; L-arginine from L-ornithine and carbamoyl phosphate: step 2/3. This chain is Argininosuccinate synthase (argG), found in Streptomyces lavendulae.